The chain runs to 92 residues: Putative transition state regulator Abh (92 aa).

The SpoVT-AbrB domain maps to 5–50 (GVVRKVDELGRIVMPIELRRALDIAIKDSIEFFVDGDKIILKKYKP).

This sequence to B.subtilis AbrB and SpoVT.

This Bacillus subtilis (strain 168) protein is Putative transition state regulator Abh (abh).